The primary structure comprises 70 residues: Large ribosomal subunit protein bL31 (70 aa).

Residues Cys16, Cys18, Cys37, and Cys40 each contribute to the Zn(2+) site.

This sequence belongs to the bacterial ribosomal protein bL31 family. Type A subfamily. Part of the 50S ribosomal subunit. The cofactor is Zn(2+).

Functionally, binds the 23S rRNA. In Shewanella oneidensis (strain ATCC 700550 / JCM 31522 / CIP 106686 / LMG 19005 / NCIMB 14063 / MR-1), this protein is Large ribosomal subunit protein bL31.